Reading from the N-terminus, the 246-residue chain is tRNA pseudouridine synthase A (246 aa).

The Nucleophile role is filled by Asp52. Residue Tyr111 participates in substrate binding.

This sequence belongs to the tRNA pseudouridine synthase TruA family. In terms of assembly, homodimer.

The catalysed reaction is uridine(38/39/40) in tRNA = pseudouridine(38/39/40) in tRNA. Functionally, formation of pseudouridine at positions 38, 39 and 40 in the anticodon stem and loop of transfer RNAs. The chain is tRNA pseudouridine synthase A from Borreliella burgdorferi (strain ATCC 35210 / DSM 4680 / CIP 102532 / B31) (Borrelia burgdorferi).